We begin with the raw amino-acid sequence, 156 residues long: MAGWPGAGPLCVLGGAALGVCLAGVAGQLVEPSTAPPKPKPPPLTKETVVFWDMRLWHVVGIFSLFVLSIIITLCCVFNCRVPRTRKEIEARYLQRKAAKMYTDKLETVPPLNELTEVPGEDKKKKKKKKKDSVDTVAIKVEEDEKNEAKKKKGEK.

A signal peptide spans 1–27 (MAGWPGAGPLCVLGGAALGVCLAGVAG). Over 28-57 (QLVEPSTAPPKPKPPPLTKETVVFWDMRLW) the chain is Extracellular. The chain crosses the membrane as a helical span at residues 58–78 (HVVGIFSLFVLSIIITLCCVF). The Cytoplasmic portion of the chain corresponds to 79–156 (NCRVPRTRKE…NEAKKKKGEK (78 aa)). Residues 113–135 (NELTEVPGEDKKKKKKKKKDSVD) are disordered.

Forms the MET channel composed of TMC (TMC1 or TMC2), TMIE, TOMT, CIB (CIB2 or CIB3), LHPL5 and PCDH15. Expressed in many tissues.

The protein resides in the membrane. Its function is as follows. Auxiliary subunit of the mechanotransducer (MET) non-specific cation channel complex located at the tips of stereocilia of cochlear hair cells and that mediates sensory transduction in the auditory system. The MET complex is composed of two dimeric pore-forming ion-conducting transmembrane TMC (TMC1 or TMC2) subunits, and aided by several auxiliary proteins including LHFPL5, TMIE, CIB2/3 and TOMT, and the tip-link PCDH15. May contribute to the formation of the pore. The sequence is that of Transmembrane inner ear expressed protein (TMIE) from Homo sapiens (Human).